We begin with the raw amino-acid sequence, 102 residues long: PqqA binding protein (102 aa).

The protein belongs to the PqqD family. Monomer. Interacts with PqqE.

It participates in cofactor biosynthesis; pyrroloquinoline quinone biosynthesis. Functions as a PqqA binding protein and presents PqqA to PqqE, in the pyrroloquinoline quinone (PQQ) biosynthetic pathway. This Rhodopseudomonas palustris (strain ATCC BAA-98 / CGA009) protein is PqqA binding protein.